The following is a 40-amino-acid chain: Large ribosomal subunit protein bL36A (40 aa).

The protein belongs to the bacterial ribosomal protein bL36 family.

This is Large ribosomal subunit protein bL36A from Paenarthrobacter aurescens (strain TC1).